Here is a 331-residue protein sequence, read N- to C-terminus: Ketol-acid reductoisomerase (NADP(+)) (331 aa).

Residues 2–182 (VEIYYDDDAN…GGTRAGALRT (181 aa)) enclose the KARI N-terminal Rossmann domain. NADP(+) contacts are provided by residues 25 to 28 (FGSQ), S51, and S53. The active site involves H108. G134 contacts NADP(+). A KARI C-terminal knotted domain is found at 183–328 (TFTEETETDL…GKLRPMMSWI (146 aa)). Mg(2+) is bound by residues D191, E195, E227, and E231. Position 252 (S252) interacts with substrate.

The protein belongs to the ketol-acid reductoisomerase family. Mg(2+) serves as cofactor.

It catalyses the reaction (2R)-2,3-dihydroxy-3-methylbutanoate + NADP(+) = (2S)-2-acetolactate + NADPH + H(+). The enzyme catalyses (2R,3R)-2,3-dihydroxy-3-methylpentanoate + NADP(+) = (S)-2-ethyl-2-hydroxy-3-oxobutanoate + NADPH + H(+). The protein operates within amino-acid biosynthesis; L-isoleucine biosynthesis; L-isoleucine from 2-oxobutanoate: step 2/4. It participates in amino-acid biosynthesis; L-valine biosynthesis; L-valine from pyruvate: step 2/4. Its function is as follows. Involved in the biosynthesis of branched-chain amino acids (BCAA). Catalyzes an alkyl-migration followed by a ketol-acid reduction of (S)-2-acetolactate (S2AL) to yield (R)-2,3-dihydroxy-isovalerate. In the isomerase reaction, S2AL is rearranged via a Mg-dependent methyl migration to produce 3-hydroxy-3-methyl-2-ketobutyrate (HMKB). In the reductase reaction, this 2-ketoacid undergoes a metal-dependent reduction by NADPH to yield (R)-2,3-dihydroxy-isovalerate. This is Ketol-acid reductoisomerase (NADP(+)) from Parafrankia sp. (strain EAN1pec).